Here is a 204-residue protein sequence, read N- to C-terminus: Glycerol-3-phosphate acyltransferase (204 aa).

5 helical membrane passes run 8 to 28 (ILIFAYLLGSINSAIIVCYIF), 53 to 73 (VPAAITLIFDILKGLVPVVIA), 81 to 101 (FITACTALYAILGHIFPIFFG), 116 to 136 (FGFSWILGLIFVITWLCVAII), and 155 to 175 (VIFTSDLQVAAPFLIIAIIIL).

This sequence belongs to the PlsY family. In terms of assembly, probably interacts with PlsX.

It localises to the cell inner membrane. The catalysed reaction is an acyl phosphate + sn-glycerol 3-phosphate = a 1-acyl-sn-glycero-3-phosphate + phosphate. It participates in lipid metabolism; phospholipid metabolism. Functionally, catalyzes the transfer of an acyl group from acyl-phosphate (acyl-PO(4)) to glycerol-3-phosphate (G3P) to form lysophosphatidic acid (LPA). This enzyme utilizes acyl-phosphate as fatty acyl donor, but not acyl-CoA or acyl-ACP. The protein is Glycerol-3-phosphate acyltransferase of Francisella tularensis subsp. mediasiatica (strain FSC147).